The primary structure comprises 355 residues: Dihydroorotate dehydrogenase (quinone) (355 aa).

FMN is bound by residues alanine 68–lysine 72 and threonine 92. Lysine 72 serves as a coordination point for substrate. Asparagine 117–phenylalanine 121 contributes to the substrate binding site. 2 residues coordinate FMN: asparagine 154 and asparagine 190. Asparagine 190 is a binding site for substrate. Catalysis depends on serine 193, which acts as the Nucleophile. Substrate is bound at residue asparagine 195. FMN-binding residues include lysine 232 and threonine 260. Asparagine 261–threonine 262 contributes to the substrate binding site. FMN contacts are provided by residues glycine 286, glycine 315, and tyrosine 336–serine 337.

It belongs to the dihydroorotate dehydrogenase family. Type 2 subfamily. Monomer. The cofactor is FMN.

It localises to the cell membrane. The catalysed reaction is (S)-dihydroorotate + a quinone = orotate + a quinol. Its pathway is pyrimidine metabolism; UMP biosynthesis via de novo pathway; orotate from (S)-dihydroorotate (quinone route): step 1/1. Functionally, catalyzes the conversion of dihydroorotate to orotate with quinone as electron acceptor. This chain is Dihydroorotate dehydrogenase (quinone), found in Nocardioides sp. (strain ATCC BAA-499 / JS614).